Here is a 128-residue protein sequence, read N- to C-terminus: Keratin-associated protein 2-3 (128 aa).

The interval 5–112 (CCGSTLSSLS…SVQSPCCRPP (108 aa)) is 10 X 5 AA repeats of C-C-[CDPQRWG]-[APRS]-[CIPSTVD].

Belongs to the KRTAP type 2 family. Interacts with hair keratins.

In the hair cortex, hair keratin intermediate filaments are embedded in an interfilamentous matrix, consisting of hair keratin-associated proteins (KRTAP), which are essential for the formation of a rigid and resistant hair shaft through their extensive disulfide bond cross-linking with abundant cysteine residues of hair keratins. The matrix proteins include the high-sulfur and high-glycine-tyrosine keratins. This chain is Keratin-associated protein 2-3 (KRTAP2-3), found in Homo sapiens (Human).